The following is an 88-amino-acid chain: MAVKIRLRRMGAKKAPFYRIVVADSRSPRDGRFIEEIGYYDPLKKPAVINVNAERALDWLKKGAQLSDTAKALLTKAGVLKKTAGEGQ.

This sequence belongs to the bacterial ribosomal protein bS16 family.

In Pelotomaculum thermopropionicum (strain DSM 13744 / JCM 10971 / SI), this protein is Small ribosomal subunit protein bS16.